Consider the following 348-residue polypeptide: Serpentine receptor class alpha-29 (348 aa).

6 helical membrane passes run 28 to 48 (FILMIIVVSFITTALAVQTLW), 108 to 130 (FLYYQTALFSSFYCVSLFLDRLF), 145 to 165 (GFIVFLILQIICPIAIQFWTF), 193 to 213 (INDSRIIIMGTIFMCSLFLYI), 246 to 266 (CIIIFSQITCLGITSFVPSIF), and 280 to 300 (LILAFMAGATYSNFFLPLIVI).

It belongs to the nematode receptor-like protein sra family.

It localises to the membrane. The chain is Serpentine receptor class alpha-29 (sra-29) from Caenorhabditis elegans.